The sequence spans 472 residues: Na(+)/H(+) antiporter NhaA (472 aa).

11 consecutive transmembrane segments (helical) span residues Ala-48 to Trp-68, Met-91 to Leu-111, Ala-129 to Val-149, Ala-157 to Leu-177, Leu-185 to Ala-205, His-210 to Leu-230, His-237 to Val-257, Gly-337 to Phe-357, Val-374 to Val-394, Leu-410 to Leu-430, and Leu-443 to Gly-463.

It belongs to the NhaA Na(+)/H(+) (TC 2.A.33) antiporter family.

Its subcellular location is the cell inner membrane. It catalyses the reaction Na(+)(in) + 2 H(+)(out) = Na(+)(out) + 2 H(+)(in). Na(+)/H(+) antiporter that extrudes sodium in exchange for external protons. The polypeptide is Na(+)/H(+) antiporter NhaA (Syntrophobacter fumaroxidans (strain DSM 10017 / MPOB)).